A 375-amino-acid chain; its full sequence is UPF0612 protein C569.003 (375 aa).

The protein belongs to the UPF0612 family.

It localises to the cytoplasm. The polypeptide is UPF0612 protein C569.003 (Schizosaccharomyces pombe (strain 972 / ATCC 24843) (Fission yeast)).